The following is a 311-amino-acid chain: Systemic RNA interference defective protein 2 (311 aa).

The first 20 residues, 1 to 20 (MPRFVYFCFALIALLPISWT), serve as a signal peptide directing secretion. Topologically, residues 21-188 (MDGILITDVE…EETKTVVNKN (168 aa)) are extracellular. The helical transmembrane segment at 189–209 (GGAVAVAVIEGIALIAILAFL) threads the bilayer. The Cytoplasmic segment spans residues 210 to 311 (GYRTMVNHKL…NDPFATLESW (102 aa)). The segment covering 287–301 (NSSAAQPSTTSNGQF) has biased composition (polar residues). The tract at residues 287–311 (NSSAAQPSTTSNGQFNDPFATLESW) is disordered.

As to expression, expressed in the intestinal lumen. Also present, at lower levels, in the excretory duct cells.

The protein localises to the apical cell membrane. It localises to the cytoplasm. Plays a role in RNA-mediated gene silencing by mediating endocytic uptake of double-stranded RNA (dsRNA) ingested from the environment into intestinal cells from the intestinal lumen. Selective for dsRNAs of at least 50 bp. Required for avoidance behavior induced by small RNAs derived from pathogenic bacteria such as P.aeruginosa. The polypeptide is Systemic RNA interference defective protein 2 (Caenorhabditis elegans).